The chain runs to 1312 residues: Retinoblastoma-like protein A (1312 aa).

Disordered regions lie at residues 1–67 (MMAH…NNEN), 168–231 (SSSS…KNSS), 336–359 (HNYN…NNNN), 536–611 (NNNN…IYGT), 987–1023 (NNNN…NNNN), 1168–1236 (KKND…NNTE), and 1249–1312 (EESP…RLKS). Over residues 10–67 (TNINTKTTAPTTTTTEQQPEQQQQQPEQQQQEKQNNNNNNNNNNNNNNNINNNENNEN) the composition is skewed to low complexity. A coiled-coil region spans residues 36-117 (EQQQQEKQNN…TSSALNVDQD (82 aa)). Residues 168–179 (SSSSFQPDNNSK) show a composition bias toward polar residues. Residues 180–189 (IKGRKIRKTN) show a composition bias toward basic residues. A coiled-coil region spans residues 195–230 (NNDSNEEEEETTTDTEEEEEEDTLLNENNNSINKNS). Residues 198–218 (SNEEEEETTTDTEEEEEEDTL) are compositionally biased toward acidic residues. Low complexity-rich tracts occupy residues 219–231 (LNEN…KNSS), 337–359 (NYNN…NNNN), and 536–595 (NNNN…SSSS). Composition is skewed to low complexity over residues 1185-1234 (NNNN…NNNN), 1251-1275 (SPST…NNNK), and 1286-1305 (SPSS…SSSG).

This sequence belongs to the retinoblastoma protein (RB) family.

It localises to the nucleus. Key regulator of entry into cell division. Directly involved in heterochromatin formation by maintaining overall chromatin structure and, in particular, that of constitutive heterochromatin by stabilizing histone methylation. Controls histone H4 'Lys-20' trimethylation. Probably acts as a transcription repressor by recruiting chromatin-modifying enzymes to promoters. Plays a dual role, regulating cell-cycle progression and transcriptional events leading to terminal differentiation. In the absence of a G1 phase, functions in late G2 controlling the expression of both S-phase and mitotic genes. Controls stalk/spore preference by suppressing the DIF response in cells destined for the spore pathway. DIF is a chlorinated hydroxyphenone made by cells of spore pathway that promotes stalk differentiation. The chain is Retinoblastoma-like protein A from Dictyostelium discoideum (Social amoeba).